A 134-amino-acid polypeptide reads, in one-letter code: Large-conductance mechanosensitive channel (134 aa).

The next 2 membrane-spanning stretches (helical) occupy residues 16-36 (VIDL…VTAL) and 81-101 (GDFL…FIIV).

The protein belongs to the MscL family. In terms of assembly, homopentamer.

The protein localises to the cell inner membrane. Its function is as follows. Channel that opens in response to stretch forces in the membrane lipid bilayer. May participate in the regulation of osmotic pressure changes within the cell. This Xylella fastidiosa (strain M12) protein is Large-conductance mechanosensitive channel.